We begin with the raw amino-acid sequence, 277 residues long: Putative phosphoenolpyruvate synthase regulatory protein (277 aa).

157–164 (GVSRSGKT) provides a ligand contact to ADP.

Belongs to the pyruvate, phosphate/water dikinase regulatory protein family. PSRP subfamily.

It catalyses the reaction [pyruvate, water dikinase] + ADP = [pyruvate, water dikinase]-phosphate + AMP + H(+). The catalysed reaction is [pyruvate, water dikinase]-phosphate + phosphate + H(+) = [pyruvate, water dikinase] + diphosphate. In terms of biological role, bifunctional serine/threonine kinase and phosphorylase involved in the regulation of the phosphoenolpyruvate synthase (PEPS) by catalyzing its phosphorylation/dephosphorylation. This is Putative phosphoenolpyruvate synthase regulatory protein from Vibrio atlanticus (strain LGP32) (Vibrio splendidus (strain Mel32)).